The following is a 105-amino-acid chain: MAEWNGEYVSPYAEHGKKSKQVKKITVSIPLKVLKILTDERTRRQVNNLRHATNSELLCEAFLHAFTGQPLPNDEDLRKERSDEIPEAAKILMRELGVDPDTWEY.

Belongs to the MetJ family. As to quaternary structure, homodimer.

The protein resides in the cytoplasm. This regulatory protein, when combined with SAM (S-adenosylmethionine) represses the expression of the methionine regulon and of enzymes involved in SAM synthesis. The protein is Met repressor of Yersinia pestis bv. Antiqua (strain Antiqua).